The following is a 148-amino-acid chain: Probable 4-amino-4-deoxy-L-arabinose-phosphoundecaprenol flippase subunit ArnF (148 aa).

The Cytoplasmic segment spans residues 1–23 (MRGDNTGVGKEPAVTERPAIKGY). Residues 24–44 (LYVLGSILLVTLAQLAMKWGV) traverse the membrane as a helical segment. The Periplasmic portion of the chain corresponds to 45-63 (MQLPAWQASLDIMLAHPVP). Residues 64 to 84 (LLVITAGVGCYALSLLCWLAA) traverse the membrane as a helical segment. The Cytoplasmic segment spans residues 85-91 (LHFTPLN). A helical transmembrane segment spans residues 92–112 (IAYPLLSTSYALVYLLAVSIP). The Periplasmic portion of the chain corresponds to 113-117 (SFAEP). Residues 118-138 (LEPGKAVGVIFILLGAVLVGI) form a helical membrane-spanning segment. Residues 139–148 (KPVGRKRNAH) lie on the Cytoplasmic side of the membrane.

Belongs to the ArnF family. In terms of assembly, heterodimer of ArnE and ArnF.

The protein localises to the cell inner membrane. It participates in bacterial outer membrane biogenesis; lipopolysaccharide biosynthesis. Translocates 4-amino-4-deoxy-L-arabinose-phosphoundecaprenol (alpha-L-Ara4N-phosphoundecaprenol) from the cytoplasmic to the periplasmic side of the inner membrane. The protein is Probable 4-amino-4-deoxy-L-arabinose-phosphoundecaprenol flippase subunit ArnF of Aeromonas salmonicida (strain A449).